Reading from the N-terminus, the 399-residue chain is Insertion element IS900 uncharacterized 42 kDa protein (399 aa).

The protein belongs to the transposase IS1111A/IS1328/IS1533 family.

This chain is Insertion element IS900 uncharacterized 42 kDa protein, found in Mycobacterium paratuberculosis.